Consider the following 341-residue polypeptide: L-threonine 3-dehydrogenase (341 aa).

Zn(2+) is bound at residue cysteine 38. Residues threonine 40 and histidine 43 each act as charge relay system in the active site. Zn(2+)-binding residues include histidine 63, glutamate 64, cysteine 93, cysteine 96, cysteine 99, and cysteine 107. Residues isoleucine 175, aspartate 195, arginine 200, 262-264 (LGI), and 286-287 (IY) each bind NAD(+).

It belongs to the zinc-containing alcohol dehydrogenase family. Homotetramer. It depends on Zn(2+) as a cofactor.

It is found in the cytoplasm. The enzyme catalyses L-threonine + NAD(+) = (2S)-2-amino-3-oxobutanoate + NADH + H(+). It functions in the pathway amino-acid degradation; L-threonine degradation via oxydo-reductase pathway; glycine from L-threonine: step 1/2. In terms of biological role, catalyzes the NAD(+)-dependent oxidation of L-threonine to 2-amino-3-ketobutyrate. In Escherichia coli (strain K12 / MC4100 / BW2952), this protein is L-threonine 3-dehydrogenase.